Reading from the N-terminus, the 414-residue chain is Histidine--tRNA ligase (414 aa).

The protein belongs to the class-II aminoacyl-tRNA synthetase family. Homodimer.

It localises to the cytoplasm. The catalysed reaction is tRNA(His) + L-histidine + ATP = L-histidyl-tRNA(His) + AMP + diphosphate + H(+). In Rickettsia africae (strain ESF-5), this protein is Histidine--tRNA ligase.